The chain runs to 83 residues: Small ribosomal subunit protein uS17 (83 aa).

This sequence belongs to the universal ribosomal protein uS17 family. Part of the 30S ribosomal subunit.

Functionally, one of the primary rRNA binding proteins, it binds specifically to the 5'-end of 16S ribosomal RNA. The protein is Small ribosomal subunit protein uS17 of Campylobacter jejuni subsp. jejuni serotype O:6 (strain 81116 / NCTC 11828).